We begin with the raw amino-acid sequence, 36 residues long: Photosystem I reaction center subunit VIII (36 aa).

Residues 9-29 (IFVPLVGLVFPAVAMASLFLY) form a helical membrane-spanning segment.

This sequence belongs to the PsaI family.

The protein resides in the plastid. It is found in the chloroplast thylakoid membrane. May help in the organization of the PsaL subunit. This chain is Photosystem I reaction center subunit VIII, found in Ostreococcus tauri.